Consider the following 280-residue polypeptide: UBX domain-containing protein 10 (280 aa).

The interval 41 to 94 (SAKGRTRPSLQKSQGVEVCAHHIPSPPPAIPYELPSSQKPGACAPKSPNQGASD) is disordered. Ser-87 carries the post-translational modification Phosphoserine. The region spanning 194 to 271 (DQEPRLLLAV…RIPHKSVLGI (78 aa)) is the UBX domain.

Belongs to the UBXN10 family. In terms of assembly, interacts with CLUAP1; the interaction is direct and mediates interaction with the intraflagellar transport complex B (IFT-B). Interacts with VCP; the interaction is direct.

It is found in the cell projection. Its subcellular location is the cilium. VCP/p97-binding protein required for ciliogenesis. Acts as a tethering factor that facilitates recruitment of VCP/p97 to the intraflagellar transport complex B (IFT-B) in cilia. UBX domain-containing proteins act as tethering factors for VCP/p97 and may specify substrate specificity of VCP/p97. This chain is UBX domain-containing protein 10, found in Homo sapiens (Human).